The sequence spans 134 residues: MKSLFYLKLLLWVVLLSLCLLMAHRKTKVADKFRALRSRIQLRFNRHIRLNDSFADDLENGLHSRNFDIISENSNDVRGGLDDVSKNEIKQIMENDNVDFDKARLLYMERKFGQNGIAPDGTPIDPKAFTFDSR.

Positions 1-23 (MKSLFYLKLLLWVVLLSLCLLMA) are cleaved as a signal peptide. 2 positions are modified to phosphoserine: serine 71 and serine 74. Lysine 86 participates in a covalent cross-link: Glycyl lysine isopeptide (Lys-Gly) (interchain with G-Cter in ubiquitin).

The protein belongs to the UPF0357 family.

The polypeptide is UPF0357 protein YCL012C (Saccharomyces cerevisiae (strain ATCC 204508 / S288c) (Baker's yeast)).